Consider the following 252-residue polypeptide: MSVVRLIIEYDGTPYVGWQRQPNGLSVQQVVEEALAKVCGGPHSLVSSGRTDAGVHARGMVAHFVTPQPLPMAAYREGVNRFLPAQIAVRDAALMPDDFHARYSAVGKWYRYSIYRSPVRSPLACRFSWHVRTVLDLQAMRQAARLLVGRHDFAAFRASGCAARTTVREVFSVDIVDAEEWVYVDVRGSGFLRNMVRIMVGTLVEVGRGARPPEEVGAMLAGGCRKQSGITAPAQGLCLMEVAYAPQDCVEG.

The active-site Nucleophile is the Asp-52. Tyr-110 lines the substrate pocket.

The protein belongs to the tRNA pseudouridine synthase TruA family. In terms of assembly, homodimer.

The enzyme catalyses uridine(38/39/40) in tRNA = pseudouridine(38/39/40) in tRNA. In terms of biological role, formation of pseudouridine at positions 38, 39 and 40 in the anticodon stem and loop of transfer RNAs. The chain is tRNA pseudouridine synthase A from Syntrophotalea carbinolica (strain DSM 2380 / NBRC 103641 / GraBd1) (Pelobacter carbinolicus).